A 282-amino-acid polypeptide reads, in one-letter code: MSRQTATALPTGTSKCPPSQRVPTLSGTTASNSDLASLFECPVCFDYVLPPILQCQSGHLVCSNCRPKLTCCPTCRGPLGSIRNLAMEKVANSVLFPCKYASSGCEVTLPHTDKAEHEELCEFRPYSCPCPGASCKWQGSLDAVMPHLLHQHKSITTLQGEDIVFLATDINLPGAVDWVMMQSCFGFHFMLVLEKQEKYDGHQQFFAIVQLIGTRKQAENFAYRLELNGHRRRLTWEATPRSIHEGIATAIMNSDCLVFDTSIAQLFAENGNLGINVTISMC.

Positions 1 to 28 (MSRQTATALPTGTSKCPPSQRVPTLSGT) are disordered. An RING-type zinc finger spans residues 41–76 (CPVCFDYVLPPILQCQSGHLVCSNCRPKLTCCPTCR). Residues 90–282 (VANSVLFPCK…LGINVTISMC (193 aa)) form an SBD region. Residues 93-153 (SVLFPCKYAS…VMPHLLHQHK (61 aa)) form an SIAH-type zinc finger. Residues Cys98, Cys105, His117, Cys121, Cys128, Cys135, His147, and His152 each contribute to the Zn(2+) site.

It belongs to the SINA (Seven in absentia) family. As to quaternary structure, homodimer.

The enzyme catalyses S-ubiquitinyl-[E2 ubiquitin-conjugating enzyme]-L-cysteine + [acceptor protein]-L-lysine = [E2 ubiquitin-conjugating enzyme]-L-cysteine + N(6)-ubiquitinyl-[acceptor protein]-L-lysine.. The protein operates within protein modification; protein ubiquitination. Its function is as follows. E3 ubiquitin-protein ligase that mediates ubiquitination and subsequent proteasomal degradation of target proteins. E3 ubiquitin ligases accept ubiquitin from an E2 ubiquitin-conjugating enzyme in the form of a thioester and then directly transfers the ubiquitin to targeted substrates. It probably triggers the ubiquitin-mediated degradation of different substrates. This Danio rerio (Zebrafish) protein is E3 ubiquitin-protein ligase Siah1 (siah1).